A 484-amino-acid polypeptide reads, in one-letter code: MASLLWGGDAGAAESERLNSHFSNLVHPRKNLRGIRSTTVPNIDGSLNTEDDDDDEDDVVDLAANSLLNKLIRQSLIESSHRVEVLQKDPSSPLYSVKTFEELRLKEELLKGIYAMGFNRPSKIQEMALPMMLAHPPQNLIAQSQSGTGKTAAFVLAMLSRVNALELFPQCLCLAPTYELALQTGRVVERMGKFCVDVEVMYAIRGNRIPRGTEVTKQIIIGTPGTVLDWCFKRKLIDLTKIRVFVLDEADVMIDTQGFSDQSIRIQRALPSECQMLLFSATFEDSVWQFAERIIPDPNVIKLRKEELTLNNIRQYYVLCENRKGKYQALCNIYGGITIGQAIIFCQTRRNAKWLTVEMMQDGHQVSLLSGELTVEQRASIIQRFRDGKEKVLITTNVCARGIDVKQVTIVVNFDLPVNQSEEPDYETYLHRIGRTGRFGKKGLAFNMIEVDKLPLLMKIQDHFNSNIKQLDPEDMDEIEKIEY.

Residue Thr-49 is modified to Phosphothreonine. Positions 62–75 (LAANSLLNKLIRQS) match the Nuclear export signal motif. A Q motif motif is present at residues 98–126 (KTFEELRLKEELLKGIYAMGFNRPSKIQE). The Nuclear localization signal signature appears at 101–115 (EELRLKEELLKGIYA). A Helicase ATP-binding domain is found at 131 to 301 (MMLAHPPQNL…ERIIPDPNVI (171 aa)). 144-151 (SQSGTGKT) contacts ATP. The DEAD box signature appears at 248–251 (DEAD). Residues 312–479 (NIRQYYVLCE…QLDPEDMDEI (168 aa)) form the Helicase C-terminal domain.

This sequence belongs to the DEAD box helicase family. Post-translationally, phosphorylated on threonine residues. The phosphorylated form is found in the cytoplasm but not in the nucleus. Isoform 1 is expressed in germ cells. Isoform 2 is expressed in Leydig cells and in round spermatids of adult testis upon gonadotropin stimulation.

It is found in the cytoplasm. Its subcellular location is the nucleus. It carries out the reaction ATP + H2O = ADP + phosphate + H(+). Its function is as follows. ATP-dependent RNA helicase. Required for mRNA export and translation regulation during spermatid development. The protein is ATP-dependent RNA helicase DDX25 (Ddx25) of Mus musculus (Mouse).